Here is a 663-residue protein sequence, read N- to C-terminus: Fructose-1,6-bisphosphatase class 3 1 (663 aa).

This sequence belongs to the FBPase class 3 family. Requires Mn(2+) as cofactor.

The enzyme catalyses beta-D-fructose 1,6-bisphosphate + H2O = beta-D-fructose 6-phosphate + phosphate. It participates in carbohydrate biosynthesis; gluconeogenesis. This chain is Fructose-1,6-bisphosphatase class 3 1, found in Clostridium beijerinckii (strain ATCC 51743 / NCIMB 8052) (Clostridium acetobutylicum).